Reading from the N-terminus, the 171-residue chain is Co-chaperone protein HscB (171 aa).

Residues 2 to 74 (DYFTLFGLPA…LTRAEYLLSL (73 aa)) form the J domain.

This sequence belongs to the HscB family. As to quaternary structure, interacts with HscA and stimulates its ATPase activity. Interacts with IscU.

Co-chaperone involved in the maturation of iron-sulfur cluster-containing proteins. Seems to help targeting proteins to be folded toward HscA. The protein is Co-chaperone protein HscB of Citrobacter koseri (strain ATCC BAA-895 / CDC 4225-83 / SGSC4696).